The following is a 353-amino-acid chain: Photosystem II protein D1 (353 aa).

The residue at position 2 (Thr2) is an N-acetylthreonine. Position 2 is a phosphothreonine (Thr2). 3 helical membrane passes run 29-46 (YIGW…TATS), 118-133 (HFFL…EWEL), and 142-156 (WIAV…AATA). His118 serves as a coordination point for chlorophyll a. Tyr126 contributes to the pheophytin a binding site. The [CaMn4O5] cluster site is built by Asp170 and Glu189. The chain crosses the membrane as a helical span at residues 197 to 218 (FHMLGVAGVFGGSLFSAMHGSL). His198 contributes to the chlorophyll a binding site. A quinone is bound by residues His215 and 264-265 (SF). His215 is a binding site for Fe cation. Fe cation is bound at residue His272. The chain crosses the membrane as a helical span at residues 274 to 288 (FLAAWPVVGIWFTAL). Residues His332, Glu333, Asp342, and Ala344 each coordinate [CaMn4O5] cluster. A propeptide spanning residues 345-353 (VVEAPAVNG) is cleaved from the precursor.

The protein belongs to the reaction center PufL/M/PsbA/D family. PSII is composed of 1 copy each of membrane proteins PsbA, PsbB, PsbC, PsbD, PsbE, PsbF, PsbH, PsbI, PsbJ, PsbK, PsbL, PsbM, PsbT, PsbX, PsbY, PsbZ, Psb30/Ycf12, at least 3 peripheral proteins of the oxygen-evolving complex and a large number of cofactors. It forms dimeric complexes. The D1/D2 heterodimer binds P680, chlorophylls that are the primary electron donor of PSII, and subsequent electron acceptors. It shares a non-heme iron and each subunit binds pheophytin, quinone, additional chlorophylls, carotenoids and lipids. D1 provides most of the ligands for the Mn4-Ca-O5 cluster of the oxygen-evolving complex (OEC). There is also a Cl(-1) ion associated with D1 and D2, which is required for oxygen evolution. The PSII complex binds additional chlorophylls, carotenoids and specific lipids. is required as a cofactor. Tyr-161 forms a radical intermediate that is referred to as redox-active TyrZ, YZ or Y-Z. Post-translationally, C-terminally processed by CTPA; processing is essential to allow assembly of the oxygen-evolving complex and thus photosynthetic growth.

The protein resides in the plastid. Its subcellular location is the chloroplast thylakoid membrane. It carries out the reaction 2 a plastoquinone + 4 hnu + 2 H2O = 2 a plastoquinol + O2. Functionally, photosystem II (PSII) is a light-driven water:plastoquinone oxidoreductase that uses light energy to abstract electrons from H(2)O, generating O(2) and a proton gradient subsequently used for ATP formation. It consists of a core antenna complex that captures photons, and an electron transfer chain that converts photonic excitation into a charge separation. The D1/D2 (PsbA/PsbD) reaction center heterodimer binds P680, the primary electron donor of PSII as well as several subsequent electron acceptors. The polypeptide is Photosystem II protein D1 (Chlorella vulgaris (Green alga)).